The following is a 346-amino-acid chain: Cyclic GMP-AMP synthase-like protein (346 aa).

ATP contacts are provided by residues S58 and 70 to 72; that span reads EFD. 3 residues coordinate Mg(2+): E70, D72, and D165. GTP-binding positions include D165 and 212–219; that span reads MVCAPHWE. ATP is bound by residues 216–219, K237, and 252–256; these read PHWE and SYMLK.

This sequence belongs to the mab-21 family. Requires Mg(2+) as cofactor. It depends on Mn(2+) as a cofactor.

Activated in response of some unknown stimulus. Not activated in response to L-monocytogenes infection. Probable nucleotidyltransferase that catalyzes the formation of cyclic dinucleotide second messenger in response to some unknown stimulus. Does not catalyze the formation of cyclic GMP-AMP from ATP and GTP. In Drosophila melanogaster (Fruit fly), this protein is Cyclic GMP-AMP synthase-like protein.